The primary structure comprises 102 residues: Protein V2 (102 aa).

May be involved in the regulation of ssDNA versus dsDNA levels. The protein is Protein V2 of Beet curly top virus (strain California/Logan) (BCTV).